The sequence spans 478 residues: 3-isopropylmalate dehydratase large subunit (478 aa).

[4Fe-4S] cluster contacts are provided by Cys355, Cys415, and Cys418.

It belongs to the aconitase/IPM isomerase family. LeuC type 1 subfamily. Heterodimer of LeuC and LeuD. It depends on [4Fe-4S] cluster as a cofactor.

The enzyme catalyses (2R,3S)-3-isopropylmalate = (2S)-2-isopropylmalate. It participates in amino-acid biosynthesis; L-leucine biosynthesis; L-leucine from 3-methyl-2-oxobutanoate: step 2/4. Functionally, catalyzes the isomerization between 2-isopropylmalate and 3-isopropylmalate, via the formation of 2-isopropylmaleate. The protein is 3-isopropylmalate dehydratase large subunit of Paracoccus denitrificans (strain Pd 1222).